A 267-amino-acid chain; its full sequence is Putative phosphoenolpyruvate synthase regulatory protein (267 aa).

147 to 154 (GVSRSGKT) contacts ADP.

This sequence belongs to the pyruvate, phosphate/water dikinase regulatory protein family. PSRP subfamily.

It carries out the reaction [pyruvate, water dikinase] + ADP = [pyruvate, water dikinase]-phosphate + AMP + H(+). The enzyme catalyses [pyruvate, water dikinase]-phosphate + phosphate + H(+) = [pyruvate, water dikinase] + diphosphate. Functionally, bifunctional serine/threonine kinase and phosphorylase involved in the regulation of the phosphoenolpyruvate synthase (PEPS) by catalyzing its phosphorylation/dephosphorylation. The protein is Putative phosphoenolpyruvate synthase regulatory protein of Cupriavidus necator (strain ATCC 17699 / DSM 428 / KCTC 22496 / NCIMB 10442 / H16 / Stanier 337) (Ralstonia eutropha).